We begin with the raw amino-acid sequence, 164 residues long: Small ribosomal subunit protein uS5 (164 aa).

The region spanning 10 to 73 is the S5 DRBM domain; sequence LEERVVAINR…EAAKKNLIEV (64 aa).

Belongs to the universal ribosomal protein uS5 family. As to quaternary structure, part of the 30S ribosomal subunit. Contacts proteins S4 and S8.

Functionally, with S4 and S12 plays an important role in translational accuracy. In terms of biological role, located at the back of the 30S subunit body where it stabilizes the conformation of the head with respect to the body. The protein is Small ribosomal subunit protein uS5 of Streptococcus thermophilus (strain CNRZ 1066).